Here is an 843-residue protein sequence, read N- to C-terminus: Protein P (843 aa).

Positions 1–177 are terminal protein domain (TP); that stretch reads MPLSYQHFRK…FCGSPYSWEQ (177 aa). The segment at 178 to 346 is spacer; sequence ELQHGRLVFQ…YCLSHIVNLL (169 aa). 2 disordered regions span residues 218 to 243 and 290 to 316; these read LKQSRLGLQPQQGSLARGKSGRSGSI and STSKRQSSSGHAVELHNIPPSSARSQS. Over residues 290-299 the composition is skewed to polar residues; it reads STSKRQSSSG. The segment at 347-690 is polymerase/reverse transcriptase domain (RT); that stretch reads EDWGPCTEHG…YLHLYPVARQ (344 aa). The Reverse transcriptase domain maps to 357 to 600; the sequence is EHNIRIPRTP…YSLNFMGYVI (244 aa). Residues aspartate 429, aspartate 551, and aspartate 552 each contribute to the Mg(2+) site.

The protein belongs to the hepadnaviridae P protein family.

It catalyses the reaction DNA(n) + a 2'-deoxyribonucleoside 5'-triphosphate = DNA(n+1) + diphosphate. The enzyme catalyses Endonucleolytic cleavage to 5'-phosphomonoester.. With respect to regulation, activated by host HSP70 and HSP40 in vitro to be able to bind the epsilon loop of the pgRNA. Because deletion of the RNase H region renders the protein partly chaperone-independent, the chaperones may be needed indirectly to relieve occlusion of the RNA-binding site by this domain. Inhibited by several reverse-transcriptase inhibitors: Lamivudine, Adefovir and Entecavir. Multifunctional enzyme that converts the viral RNA genome into dsDNA in viral cytoplasmic capsids. This enzyme displays a DNA polymerase activity that can copy either DNA or RNA templates, and a ribonuclease H (RNase H) activity that cleaves the RNA strand of RNA-DNA heteroduplexes in a partially processive 3'- to 5'-endonucleasic mode. Neo-synthesized pregenomic RNA (pgRNA) are encapsidated together with the P protein, and reverse-transcribed inside the nucleocapsid. Initiation of reverse-transcription occurs first by binding the epsilon loop on the pgRNA genome, and is initiated by protein priming, thereby the 5'-end of (-)DNA is covalently linked to P protein. Partial (+)DNA is synthesized from the (-)DNA template and generates the relaxed circular DNA (RC-DNA) genome. After budding and infection, the RC-DNA migrates in the nucleus, and is converted into a plasmid-like covalently closed circular DNA (cccDNA). The activity of P protein does not seem to be necessary for cccDNA generation, and is presumably released from (+)DNA by host nuclear DNA repair machinery. The chain is Protein P from Homo sapiens (Human).